The chain runs to 349 residues: Fructose-1,6-bisphosphatase class 1 (349 aa).

Residues glutamate 92, aspartate 113, leucine 115, and aspartate 116 each coordinate Mg(2+). Residues 116–119, asparagine 209, tyrosine 242, and lysine 272 each bind substrate; that span reads DGSS. Glutamate 278 provides a ligand contact to Mg(2+).

This sequence belongs to the FBPase class 1 family. As to quaternary structure, homotetramer. Requires Mg(2+) as cofactor.

Its subcellular location is the cytoplasm. The catalysed reaction is beta-D-fructose 1,6-bisphosphate + H2O = beta-D-fructose 6-phosphate + phosphate. The protein operates within carbohydrate biosynthesis; Calvin cycle. The polypeptide is Fructose-1,6-bisphosphatase class 1 (Chloroherpeton thalassium (strain ATCC 35110 / GB-78)).